The chain runs to 838 residues: Periplasmic nitrate reductase (838 aa).

A signal peptide (tat-type signal) is located at residues 1 to 29 (MKVSRRAFIKQTAAAATASVAGVTLPAGA). A 4Fe-4S Mo/W bis-MGD-type domain is found at 41 to 97 (LKWSKAPCRFCGTGCGVEVAVKDNRVVATQGDPKAEVNRGLNCVKGYFLSKIMYGKD). Positions 48, 51, 55, and 83 each coordinate [4Fe-4S] cluster. Residues Lys-85, Gln-152, Asn-177, Cys-181, 214 to 221 (WGSNMAEM), 245 to 249 (STFTH), Met-382, Gln-386, Asn-492, 518 to 519 (SD), Lys-541, Asp-568, and 728 to 737 (TGRVLEHWHS) contribute to the Mo-bis(molybdopterin guanine dinucleotide) site. Trp-804 contacts substrate. Asn-812 and Lys-829 together coordinate Mo-bis(molybdopterin guanine dinucleotide).

The protein belongs to the prokaryotic molybdopterin-containing oxidoreductase family. NasA/NapA/NarB subfamily. Component of the periplasmic nitrate reductase NapAB complex composed of NapA and NapB. Requires [4Fe-4S] cluster as cofactor. Mo-bis(molybdopterin guanine dinucleotide) is required as a cofactor. Predicted to be exported by the Tat system. The position of the signal peptide cleavage has not been experimentally proven.

The protein localises to the periplasm. The catalysed reaction is 2 Fe(II)-[cytochrome] + nitrate + 2 H(+) = 2 Fe(III)-[cytochrome] + nitrite + H2O. Catalytic subunit of the periplasmic nitrate reductase complex NapAB. Receives electrons from NapB and catalyzes the reduction of nitrate to nitrite. The chain is Periplasmic nitrate reductase from Ralstonia pickettii (strain 12J).